A 160-amino-acid chain; its full sequence is Nucleotide-binding protein TERTU_3542 (160 aa).

This sequence belongs to the YajQ family.

Functionally, nucleotide-binding protein. In Teredinibacter turnerae (strain ATCC 39867 / T7901), this protein is Nucleotide-binding protein TERTU_3542.